We begin with the raw amino-acid sequence, 343 residues long: Diterpene cyclase DtcycB (343 aa).

Residues N219, S223, and E227 each coordinate Mg(2+).

The protein belongs to the terpene synthase family. Homodimer. Requires Mg(2+) as cofactor.

It carries out the reaction (2E,6E,10E)-geranylgeranyl diphosphate + H2O = (R)-nephthenol + diphosphate. It catalyses the reaction (2E,6E,10E)-geranylgeranyl diphosphate = (R)-cembrene A + diphosphate. The enzyme catalyses (2E,6E,10E)-geranylgeranyl diphosphate + H2O = (1S,4E,8E,12E)-2,2,5,9,13-pentamethylcyclopentadeca-4,8,12-trien-1-ol + diphosphate. Diterpene cyclases that can form multiple diterpene products. This chain is Diterpene cyclase DtcycB, found in Streptomyces sp.